Reading from the N-terminus, the 506-residue chain is Galactose/methyl galactoside import ATP-binding protein MglA (506 aa).

ABC transporter domains are found at residues 14-249 and 264-506; these read LEMS…VGRS and VILE…SLHL. 46–53 contacts ATP; it reads GENGAGKS.

Belongs to the ABC transporter superfamily. Galactose/methyl galactoside importer (TC 3.A.1.2.3) family. In terms of assembly, the complex is composed of one ATP-binding protein (MglA), two transmembrane proteins (MglC) and a solute-binding protein (MglB).

The protein localises to the cell inner membrane. It catalyses the reaction D-galactose(out) + ATP + H2O = D-galactose(in) + ADP + phosphate + H(+). The enzyme catalyses methyl beta-D-galactoside(out) + ATP + H2O = methyl beta-D-galactoside(in) + ADP + phosphate + H(+). In terms of biological role, part of the ABC transporter complex MglABC involved in galactose/methyl galactoside import. Responsible for energy coupling to the transport system. The sequence is that of Galactose/methyl galactoside import ATP-binding protein MglA from Shigella boydii serotype 4 (strain Sb227).